The primary structure comprises 264 residues: MRTYLDLLQHVLDHGVDRDDRTGTGTRSVFGYQMRFDLEEGFPVLTTKKLHLRSIIHELLWFLKGDTNIAYLKENGVTIWDEWADENGDLGPVYGYQWRSWPAPDGRHIDQIANLLKMLHTNPQSRSLIVSAWNPALVDEMALPPCHCLFQFYVANGRLSCQLYQRSADIFLGVPFNIASYALLTMMIAQVTGLKPGEFIHTLGDAHIYSNHFEQARLQLTRTPKKLPVMHINPDVKDLFAFRFEDFRLDGYEADPTIKAPIAV.

Residue arginine 21 participates in dUMP binding. Histidine 51 contributes to the (6R)-5,10-methylene-5,6,7,8-tetrahydrofolate binding site. Catalysis depends on cysteine 146, which acts as the Nucleophile. DUMP is bound by residues 166–169 (RSAD), asparagine 177, and 207–209 (HIY). Residue aspartate 169 participates in (6R)-5,10-methylene-5,6,7,8-tetrahydrofolate binding. Alanine 263 lines the (6R)-5,10-methylene-5,6,7,8-tetrahydrofolate pocket.

The protein belongs to the thymidylate synthase family. Bacterial-type ThyA subfamily. As to quaternary structure, homodimer.

The protein resides in the cytoplasm. The enzyme catalyses dUMP + (6R)-5,10-methylene-5,6,7,8-tetrahydrofolate = 7,8-dihydrofolate + dTMP. It participates in pyrimidine metabolism; dTTP biosynthesis. Its function is as follows. Catalyzes the reductive methylation of 2'-deoxyuridine-5'-monophosphate (dUMP) to 2'-deoxythymidine-5'-monophosphate (dTMP) while utilizing 5,10-methylenetetrahydrofolate (mTHF) as the methyl donor and reductant in the reaction, yielding dihydrofolate (DHF) as a by-product. This enzymatic reaction provides an intracellular de novo source of dTMP, an essential precursor for DNA biosynthesis. This is Thymidylate synthase from Brucella canis (strain ATCC 23365 / NCTC 10854 / RM-666).